A 444-amino-acid chain; its full sequence is 23S rRNA (uracil(1939)-C(5))-methyltransferase RlmD (444 aa).

The 63-residue stretch at 5-67 folds into the TRAM domain; it reads RNRFDRTPFQ…RHFDEAKTVE (63 aa). Positions 80, 86, 89, and 168 each coordinate [4Fe-4S] cluster. S-adenosyl-L-methionine-binding residues include Q276, F305, N310, E326, D353, and D374. The active-site Nucleophile is the C400.

This sequence belongs to the class I-like SAM-binding methyltransferase superfamily. RNA M5U methyltransferase family. RlmD subfamily.

It carries out the reaction uridine(1939) in 23S rRNA + S-adenosyl-L-methionine = 5-methyluridine(1939) in 23S rRNA + S-adenosyl-L-homocysteine + H(+). Functionally, catalyzes the formation of 5-methyl-uridine at position 1939 (m5U1939) in 23S rRNA. The chain is 23S rRNA (uracil(1939)-C(5))-methyltransferase RlmD from Xanthomonas oryzae pv. oryzae (strain MAFF 311018).